The sequence spans 882 residues: Probable LRR receptor-like serine/threonine-protein kinase At1g12460 (882 aa).

The first 21 residues, M1–S21, serve as a signal peptide directing secretion. The Extracellular segment spans residues D22–S515. N-linked (GlcNAc...) asparagine glycosylation is present at N76. LRR repeat units follow at residues F92–K113, T116–L138, S140–F162, K165–C187, N189–D210, V213–C235, R237–T258, N261–S283, S285–K308, S309–M331, S333–L355, F357–C379, V381–T404, N405–L427, K429–L451, and T453–Q475. An N-linked (GlcNAc...) asparagine glycan is attached at N121. N261 and N266 each carry an N-linked (GlcNAc...) asparagine glycan. 2 N-linked (GlcNAc...) asparagine glycosylation sites follow: N321 and N341. N402, N417, and N426 each carry an N-linked (GlcNAc...) asparagine glycan. 2 N-linked (GlcNAc...) asparagine glycosylation sites follow: N458 and N463. The chain crosses the membrane as a helical span at residues V516–L536. The Cytoplasmic segment spans residues N537–S882. A Phosphothreonine modification is found at T589. A Protein kinase domain is found at L593 to I876. ATP-binding positions include I599 to V607 and K621. The residue at position 770 (Y770) is a Phosphotyrosine.

The protein belongs to the protein kinase superfamily. Ser/Thr protein kinase family.

It localises to the cell membrane. The catalysed reaction is L-seryl-[protein] + ATP = O-phospho-L-seryl-[protein] + ADP + H(+). The enzyme catalyses L-threonyl-[protein] + ATP = O-phospho-L-threonyl-[protein] + ADP + H(+). In Arabidopsis thaliana (Mouse-ear cress), this protein is Probable LRR receptor-like serine/threonine-protein kinase At1g12460.